Here is a 265-residue protein sequence, read N- to C-terminus: Phosphonates import ATP-binding protein PhnC (265 aa).

An ABC transporter domain is found at 3–247; that stretch reads LRLKQAFLHH…MLDTLYANEQ (245 aa). 36–43 provides a ligand contact to ATP; the sequence is GPSGAGKS.

Belongs to the ABC transporter superfamily. Phosphonates importer (TC 3.A.1.9.1) family. The complex is composed of two ATP-binding proteins (PhnC), two transmembrane proteins (PhnE) and a solute-binding protein (PhnD).

It is found in the cell inner membrane. It catalyses the reaction phosphonate(out) + ATP + H2O = phosphonate(in) + ADP + phosphate + H(+). Part of the ABC transporter complex PhnCDE involved in phosphonates import. Responsible for energy coupling to the transport system. The polypeptide is Phosphonates import ATP-binding protein PhnC (Pseudomonas fluorescens (strain Pf0-1)).